The primary structure comprises 202 residues: Alpha-S1-casein (202 aa).

Disordered stretches follow at residues 1 to 25 (RPKL…VLKE) and 51 to 84 (LKEK…VVPI). 2 stretches are compositionally biased toward basic and acidic residues: residues 16–25 (QDSREKVLKE) and 51–63 (LKEK…KEYL). Serine 18 bears the Phosphoserine mark. Residues 70-80 (QESSSTSSSEE) are compositionally biased toward low complexity. Phosphoserine occurs at positions 72, 73, 74, 76, 77, and 78.

The protein belongs to the alpha-casein family. As to expression, mammary gland specific. Secreted in milk.

The protein resides in the secreted. In terms of biological role, important role in the capacity of milk to transport calcium phosphate. The polypeptide is Alpha-S1-casein (Equus asinus (Donkey)).